We begin with the raw amino-acid sequence, 403 residues long: Creatinase (403 aa).

His-232 is an active-site residue.

The protein belongs to the peptidase M24 family. Creatinase subfamily. Homodimer.

It catalyses the reaction creatine + H2O = sarcosine + urea. The protein is Creatinase of Flavobacterium sp. (strain U-188).